A 445-amino-acid chain; its full sequence is MNGTLADQLQSHLANYGQPMVNSQRNEDPSMYMNGSAASVSHTNGSSSMGNDQKFPSYKRMAQRRKVPEGELCAVCSDLATGYHYGVASCNGCKTFFRRTIVSEQTFICQYNGNCDVNKNIRCACRHCRFNKCLLVGMDAKALQIPAIQNDRDRIGPTKKIKMSSGSDDEQATTPHRLQDQEIIDQLTQVEGLCQELRRCIIPEVTGVTHALTSPCLLFETTDLKVDVSLTNTIFKELFPASMNDIRMWNIREMRICIEWAKTFDVYQRLNLFDQFALVRNFAFAFNLLNRVFYSPDHGPDKIVFQNGAFIMRQPQQQVQLSGCRPIYTRQMDEIMIPFRKLQLSVAEFATFKAALFFNPDALDLSPQAKQEVFEERNKYLGGLFTCITQKIGIPTGVQKYGSLLMMTASIQNILAQNEENMQVMELFKNWEVDPFVKELCMKRA.

The tract at residues 19–55 is disordered; that stretch reads PMVNSQRNEDPSMYMNGSAASVSHTNGSSSMGNDQKF. Polar residues predominate over residues 36-51; the sequence is SAASVSHTNGSSSMGN. A DNA-binding region (nuclear receptor) is located at residues 70–145; it reads GELCAVCSDL…VGMDAKALQI (76 aa). 2 NR C4-type zinc fingers span residues 73-93 and 109-133; these read CAVCSDLATGYHYGVASCNGC and CQYNGNCDVNKNIRCACRHCRFNKC. Residues 179-444 form the NR LBD domain; the sequence is QDQEIIDQLT…PFVKELCMKR (266 aa).

It belongs to the nuclear hormone receptor family.

The protein localises to the nucleus. In terms of biological role, orphan nuclear receptor which acts in concert with the insulin/IGF-1-like signaling (IIS) pathway during osmotic stress, perhaps in response to a ligand modified by the sulfotransferase ssu-1. The protein is Nuclear hormone receptor family member nhr-1 (nhr-1) of Caenorhabditis elegans.